Consider the following 443-residue polypeptide: Maintenance of mitochondrial morphology protein 1 (443 aa).

Topologically, residues 1–80 are lumenal; the sequence is MADLETSDLS…PSNTWSFTQG (80 aa). The helical transmembrane segment at 81–101 threads the bilayer; the sequence is LIVGQLSVVFVIVIFIKFFVF. Topologically, residues 102–443 are cytoplasmic; it reads AESSPALAKS…NGDKVEDGSN (342 aa). 2 disordered regions span residues 126–146 and 304–358; these read KKDQ…TTAS and LSAH…NDGT. The segment covering 131 to 142 has biased composition (acidic residues); that stretch reads SSDDADPDDDSE. In terms of domain architecture, SMP-LTD spans 165 to 417; the sequence is SPESLDWFNV…EPRFQVVRLP (253 aa).

It belongs to the MMM1 family. As to quaternary structure, homodimer. Component of the ER-mitochondria encounter structure (ERMES) or MDM complex, composed of MMM1, MDM10, MDM12 and MDM34. An MMM1 homodimer associates with one molecule of MDM12 on each side in a pairwise head-to-tail manner, and the SMP-LTD domains of MMM1 and MDM12 generate a continuous hydrophobic tunnel for phospholipid trafficking.

The protein localises to the endoplasmic reticulum membrane. Its function is as follows. Component of the ERMES/MDM complex, which serves as a molecular tether to connect the endoplasmic reticulum (ER) and mitochondria. Components of this complex are involved in the control of mitochondrial shape and protein biogenesis, and function in nonvesicular lipid trafficking between the ER and mitochondria. The MDM12-MMM1 subcomplex functions in the major beta-barrel assembly pathway that is responsible for biogenesis of all outer membrane beta-barrel proteins, and acts in a late step after the SAM complex. The MDM10-MDM12-MMM1 subcomplex further acts in the TOM40-specific pathway after the action of the MDM12-MMM1 complex. Essential for establishing and maintaining the structure of mitochondria and maintenance of mtDNA nucleoids. The sequence is that of Maintenance of mitochondrial morphology protein 1 from Scheffersomyces stipitis (strain ATCC 58785 / CBS 6054 / NBRC 10063 / NRRL Y-11545) (Yeast).